The sequence spans 119 residues: Immunoglobulin heavy variable 2-70D (119 aa).

The N-terminal stretch at 1-19 (MDILCSTLLLLTVPSWVLS) is a signal peptide. The residue at position 20 (glutamine 20) is a Pyrrolidone carboxylic acid. The framework-1 stretch occupies residues 20–44 (QVTLKESGPALVKPTQTLTLTCTFS). Residues 20 to 119 (QVTLKESGPA…DTATYYCARI (100 aa)) form the Ig-like domain. Cysteine 41 and cysteine 116 are joined by a disulfide. Positions 45 to 54 (GFSLSTSGMR) are complementarity-determining-1. The tract at residues 55 to 71 (VSWIRQPPGKALEWLAR) is framework-2. The tract at residues 72 to 78 (IDWDDDK) is complementarity-determining-2. The framework-3 stretch occupies residues 79-116 (FYSTSLKTRLTISKDTSKNQVVLTMTNMDPVDTATYYC). The complementarity-determining-3 stretch occupies residues 117 to 119 (ARI).

In terms of assembly, immunoglobulins are composed of two identical heavy chains and two identical light chains; disulfide-linked.

It localises to the secreted. Its subcellular location is the cell membrane. V region of the variable domain of immunoglobulin heavy chains that participates in the antigen recognition. Immunoglobulins, also known as antibodies, are membrane-bound or secreted glycoproteins produced by B lymphocytes. In the recognition phase of humoral immunity, the membrane-bound immunoglobulins serve as receptors which, upon binding of a specific antigen, trigger the clonal expansion and differentiation of B lymphocytes into immunoglobulins-secreting plasma cells. Secreted immunoglobulins mediate the effector phase of humoral immunity, which results in the elimination of bound antigens. The antigen binding site is formed by the variable domain of one heavy chain, together with that of its associated light chain. Thus, each immunoglobulin has two antigen binding sites with remarkable affinity for a particular antigen. The variable domains are assembled by a process called V-(D)-J rearrangement and can then be subjected to somatic hypermutations which, after exposure to antigen and selection, allow affinity maturation for a particular antigen. The polypeptide is Immunoglobulin heavy variable 2-70D (Homo sapiens (Human)).